The sequence spans 388 residues: Dual-specificity RNA methyltransferase RlmN (388 aa).

Glu-109 functions as the Proton acceptor in the catalytic mechanism. The 240-residue stretch at 115-354 (EDDRATLCVS…TIVRKTRGDD (240 aa)) folds into the Radical SAM core domain. Cys-122 and Cys-359 are disulfide-bonded. The [4Fe-4S] cluster site is built by Cys-129, Cys-133, and Cys-136. S-adenosyl-L-methionine-binding positions include 183–184 (GE), Ser-215, 237–239 (SLH), and Asn-316. Residue Cys-359 is the S-methylcysteine intermediate of the active site.

Belongs to the radical SAM superfamily. RlmN family. The cofactor is [4Fe-4S] cluster.

It localises to the cytoplasm. The enzyme catalyses adenosine(2503) in 23S rRNA + 2 reduced [2Fe-2S]-[ferredoxin] + 2 S-adenosyl-L-methionine = 2-methyladenosine(2503) in 23S rRNA + 5'-deoxyadenosine + L-methionine + 2 oxidized [2Fe-2S]-[ferredoxin] + S-adenosyl-L-homocysteine. It catalyses the reaction adenosine(37) in tRNA + 2 reduced [2Fe-2S]-[ferredoxin] + 2 S-adenosyl-L-methionine = 2-methyladenosine(37) in tRNA + 5'-deoxyadenosine + L-methionine + 2 oxidized [2Fe-2S]-[ferredoxin] + S-adenosyl-L-homocysteine. In terms of biological role, specifically methylates position 2 of adenine 2503 in 23S rRNA and position 2 of adenine 37 in tRNAs. m2A2503 modification seems to play a crucial role in the proofreading step occurring at the peptidyl transferase center and thus would serve to optimize ribosomal fidelity. This chain is Dual-specificity RNA methyltransferase RlmN, found in Citrobacter koseri (strain ATCC BAA-895 / CDC 4225-83 / SGSC4696).